The chain runs to 106 residues: ATP-dependent Clp protease adapter protein ClpS (106 aa).

This sequence belongs to the ClpS family. Binds to the N-terminal domain of the chaperone ClpA.

Functionally, involved in the modulation of the specificity of the ClpAP-mediated ATP-dependent protein degradation. This is ATP-dependent Clp protease adapter protein ClpS from Vibrio parahaemolyticus serotype O3:K6 (strain RIMD 2210633).